The following is a 38-amino-acid chain: Photosystem II reaction center protein L (38 aa).

The chain crosses the membrane as a helical span at residues 17–37; that stretch reads SLYWGLLLIFVLAVLFSSYIF.

The protein belongs to the PsbL family. PSII is composed of 1 copy each of membrane proteins PsbA, PsbB, PsbC, PsbD, PsbE, PsbF, PsbH, PsbI, PsbJ, PsbK, PsbL, PsbM, PsbT, PsbX, PsbY, PsbZ, Psb30/Ycf12, at least 3 peripheral proteins of the oxygen-evolving complex and a large number of cofactors. It forms dimeric complexes.

The protein resides in the plastid. It is found in the chloroplast thylakoid membrane. In terms of biological role, one of the components of the core complex of photosystem II (PSII). PSII is a light-driven water:plastoquinone oxidoreductase that uses light energy to abstract electrons from H(2)O, generating O(2) and a proton gradient subsequently used for ATP formation. It consists of a core antenna complex that captures photons, and an electron transfer chain that converts photonic excitation into a charge separation. This subunit is found at the monomer-monomer interface and is required for correct PSII assembly and/or dimerization. This chain is Photosystem II reaction center protein L, found in Tetradesmus obliquus (Green alga).